The primary structure comprises 196 residues: Large ribosomal subunit protein uL5 (196 aa).

This sequence belongs to the universal ribosomal protein uL5 family. Part of the 50S ribosomal subunit; part of the 5S rRNA/L5/L18/L25 subcomplex. Contacts the 5S rRNA and the P site tRNA. Forms a bridge to the 30S subunit in the 70S ribosome.

In terms of biological role, this is one of the proteins that bind and probably mediate the attachment of the 5S RNA into the large ribosomal subunit, where it forms part of the central protuberance. In the 70S ribosome it contacts protein S13 of the 30S subunit (bridge B1b), connecting the 2 subunits; this bridge is implicated in subunit movement. Contacts the P site tRNA; the 5S rRNA and some of its associated proteins might help stabilize positioning of ribosome-bound tRNAs. This is Large ribosomal subunit protein uL5 from Acidothermus cellulolyticus (strain ATCC 43068 / DSM 8971 / 11B).